The following is a 128-amino-acid chain: NHP2-like protein 1 (128 aa).

The segment at 36-48 (RKGANEATKTLNR) is interaction with U4 snRNA and U4atac snRNA. Positions 96-128 (SRPVIACAVTIKEGSQLKPQIQSLQQSIERLLV) are important for U4 snRNA-binding.

This sequence belongs to the eukaryotic ribosomal protein eL8 family. As to quaternary structure, identified in the spliceosome B complex. Component of the U4/U6-U5 tri-snRNP complex. Part of the small subunit (SSU) processome, composed of more than 70 proteins and the RNA chaperone small nucleolar RNA (snoRNA) U3.

It is found in the nucleus. The protein resides in the nucleolus. In terms of biological role, part of the small subunit (SSU) processome, first precursor of the small eukaryotic ribosomal subunit. During the assembly of the SSU processome in the nucleolus, many ribosome biogenesis factors, an RNA chaperone and ribosomal proteins associate with the nascent pre-rRNA and work in concert to generate RNA folding, modifications, rearrangements and cleavage as well as targeted degradation of pre-ribosomal RNA by the RNA exosome. Involved in pre-mRNA splicing as component of the spliceosome. Binds to the 5'-stem-loop of U4 snRNA and thereby contributes to spliceosome assembly. The protein undergoes a conformational change upon RNA-binding. Core component of box C/D small nucleolar ribonucleoprotein (snoRNP) complexes that function in methylation of multiple sites on ribosomal RNAs (rRNAs) and messenger RNAs (mRNAs). The protein is NHP2-like protein 1 of Xenopus tropicalis (Western clawed frog).